The primary structure comprises 148 residues: Protein-export protein SecB (148 aa).

The protein belongs to the SecB family. In terms of assembly, homotetramer, a dimer of dimers. One homotetramer interacts with 1 SecA dimer.

It is found in the cytoplasm. One of the proteins required for the normal export of preproteins out of the cell cytoplasm. It is a molecular chaperone that binds to a subset of precursor proteins, maintaining them in a translocation-competent state. It also specifically binds to its receptor SecA. This is Protein-export protein SecB from Psychrobacter arcticus (strain DSM 17307 / VKM B-2377 / 273-4).